The following is a 996-amino-acid chain: GPI ethanolamine phosphate transferase 1 (996 aa).

At 1–8 (MAAFPRFR) the chain is on the cytoplasmic side. A helical membrane pass occupies residues 9-29 (FLAIAVIFHFAYIFSIFDIYF). At 30–463 (VSPIETGMRL…LQTYDWLFLR (434 aa)) the chain is on the lumenal side. N47, N147, and N210 each carry an N-linked (GlcNAc...) asparagine glycan. The helical transmembrane segment at 464 to 484 (ALITIGYLGWIAYALTTVVDL) threads the bilayer. Over 485-495 (HVLHGRVRPSR) the chain is Cytoplasmic. The chain crosses the membrane as a helical span at residues 496 to 516 (TLGGGLFFTSVLVALYASLVI). Residues 517–518 (SK) lie on the Lumenal side of the membrane. The helical transmembrane segment at 519-539 (SPLTYYVYAFFPVFFWEEVYA) threads the bilayer. At 540–560 (HRESLAAGRKELLGHINSGGS) the chain is on the cytoplasmic side. Residues 561-581 (VASFVLNSALYVGVIESLALG) traverse the membrane as a helical segment. The Lumenal portion of the chain corresponds to 582–586 (YIHRE). A helical transmembrane segment spans residues 587–607 (ILSVLFVLGSFWPFTHGLSFL). Residues 608 to 612 (KKHGA) lie on the Cytoplasmic side of the membrane. The chain crosses the membrane as a helical span at residues 613 to 633 (LSATWFLACIAMSTFTLLPAM). Residues 634-637 (KAEN) lie on the Lumenal side of the membrane. A helical membrane pass occupies residues 638 to 658 (VNLITIGGVLMVVIGLLYLIF). Over 659–681 (EDFVLADFSWNAKPTSRNHLSRS) the chain is Cytoplasmic. The helical transmembrane segment at 682–702 (LVGIQVGLTVLSIIITRSSAL) threads the bilayer. Over 703–715 (SLQAKQGLPRGNQ) the chain is Lumenal. Residues 716 to 734 (IMGWVTLVASLLMPLAYRL) form a helical membrane-spanning segment. At 735 to 754 (RPNNHYMHRILVIFLTCAPT) the chain is on the cytoplasmic side. The chain crosses the membrane as a helical span at residues 755 to 775 (FVILTISYEGLFYLVFSALLV). The Lumenal segment spans residues 776–822 (SWVRLEHAVQKFTSSKAPQTAATKKPTTTTESHLPAPFRPLTLHDAR). The helical transmembrane segment at 823-843 (VALFFFILLQSAFFSTGNVAS) threads the bilayer. Residues 844-865 (VSSFSLDSVYRLIPIFDPFSQG) are Cytoplasmic-facing. The helical transmembrane segment at 866–886 (AMLILKLMIPFALISANLGIL) threads the bilayer. Residues 887-895 (NKRLGVAPS) lie on the Lumenal side of the membrane. Residues 896 to 916 (ALFMVVMGISDILTLYFFWVV) form a helical membrane-spanning segment. At 917 to 932 (KDEGSWLEIGSTISHF) the chain is on the cytoplasmic side. Residues 933–953 (VIASLLCVFVSALEPVSAAFI) form a helical membrane-spanning segment. Residues 954-996 (AGVEVGEESELKEEGKVAEKVVEKVNEAVEGLVSGGDGGGDES) are Lumenal-facing.

It belongs to the PIGG/PIGN/PIGO family. PIGN subfamily.

Its subcellular location is the endoplasmic reticulum membrane. It functions in the pathway glycolipid biosynthesis; glycosylphosphatidylinositol-anchor biosynthesis. Ethanolamine phosphate transferase involved in glycosylphosphatidylinositol-anchor biosynthesis. Transfers ethanolamine phosphate to the first alpha-1,4-linked mannose of the glycosylphosphatidylinositol precursor of GPI-anchor. This Neurospora crassa (strain ATCC 24698 / 74-OR23-1A / CBS 708.71 / DSM 1257 / FGSC 987) protein is GPI ethanolamine phosphate transferase 1 (mcd-4).